The chain runs to 301 residues: Pantothenate synthetase (301 aa).

ATP is bound at residue 30-37; sequence MGNLHEGH. The Proton donor role is filled by His37. Gln61 contributes to the (R)-pantoate binding site. Gln61 is a binding site for beta-alanine. Position 149-152 (149-152) interacts with ATP; it reads GEKD. Gln155 is a binding site for (R)-pantoate. ATP contacts are provided by residues Val178 and 186–189; that span reads MSSR.

Belongs to the pantothenate synthetase family. In terms of assembly, homodimer.

The protein localises to the cytoplasm. It catalyses the reaction (R)-pantoate + beta-alanine + ATP = (R)-pantothenate + AMP + diphosphate + H(+). Its pathway is cofactor biosynthesis; (R)-pantothenate biosynthesis; (R)-pantothenate from (R)-pantoate and beta-alanine: step 1/1. In terms of biological role, catalyzes the condensation of pantoate with beta-alanine in an ATP-dependent reaction via a pantoyl-adenylate intermediate. In Vibrio parahaemolyticus serotype O3:K6 (strain RIMD 2210633), this protein is Pantothenate synthetase.